The sequence spans 350 residues: 8-amino-7-oxononanoate synthase (350 aa).

77–78 (GY) is a binding site for pyridoxal 5'-phosphate. His-102 is a binding site for substrate. Residues Ser-150, 175-178 (DDAH), and 204-207 (TLSK) each bind pyridoxal 5'-phosphate. At Lys-207 the chain carries N6-(pyridoxal phosphate)lysine. Position 316 (Thr-316) interacts with substrate.

It belongs to the class-II pyridoxal-phosphate-dependent aminotransferase family. BioF subfamily. As to quaternary structure, homodimer. Pyridoxal 5'-phosphate serves as cofactor.

The catalysed reaction is 6-carboxyhexanoyl-[ACP] + L-alanine + H(+) = (8S)-8-amino-7-oxononanoate + holo-[ACP] + CO2. The protein operates within cofactor biosynthesis; biotin biosynthesis. Functionally, catalyzes the decarboxylative condensation of pimeloyl-[acyl-carrier protein] and L-alanine to produce 8-amino-7-oxononanoate (AON), [acyl-carrier protein], and carbon dioxide. In Methylocella silvestris (strain DSM 15510 / CIP 108128 / LMG 27833 / NCIMB 13906 / BL2), this protein is 8-amino-7-oxononanoate synthase.